A 435-amino-acid chain; its full sequence is GTPase Der (435 aa).

2 consecutive EngA-type G domains span residues 4–167 (KIVA…SKND) and 175–350 (TKIA…QSLS). GTP is bound by residues 10–17 (GRPNVGKS), 57–61 (DTGGI), 119–122 (NKYD), 181–188 (GRPNVGKS), 228–232 (DTAGI), and 293–296 (NKWD). One can recognise a KH-like domain in the interval 351 to 435 (VKVKTYVLNE…PINLIFRERK (85 aa)).

The protein belongs to the TRAFAC class TrmE-Era-EngA-EngB-Septin-like GTPase superfamily. EngA (Der) GTPase family. Associates with the 50S ribosomal subunit.

In terms of biological role, GTPase that plays an essential role in the late steps of ribosome biogenesis. The sequence is that of GTPase Der from Mycoplasma mycoides subsp. mycoides SC (strain CCUG 32753 / NCTC 10114 / PG1).